The following is a 163-amino-acid chain: MTVKSLHVTAMVKYLLLLILGLAFLRETAAQRVPKEGQTFFQKPESCPSVPEGSLKLDLGIINANQRVPLSRNIERRSTSPWNYTVTWDPNRYPSEVVQAQCRHLGCVNAQGKEDIFMNSVPIQQETLVLRRKHQGCSVSFQLEKLLVTVGCTCVKPLIHHVH.

The N-terminal stretch at 1–30 (MTVKSLHVTAMVKYLLLLILGLAFLRETAA) is a signal peptide. An N-linked (GlcNAc...) asparagine glycan is attached at Asn83. 2 disulfides stabilise this stretch: Cys102–Cys152 and Cys107–Cys154.

Belongs to the IL-17 family. Homodimer; disulfide-linked. Heterodimer with IL17A (IL17A-IL17F). Forms complexes with IL17RA and IL17RC receptors with 2:1 binding stoichiometry: two receptor chains for one interleukin molecule. IL17F homodimer forms predominantly complexes with IL17RC homodimer, whereas IL17A-IL17F favors complexes with IL17RA-IL17RC. IL17RA and IL17RC chains cannot distinguish between IL17A and IL17F molecules, potentially enabling the formation of topologically distinct complexes.

It localises to the secreted. Functionally, effector cytokine of innate and adaptive immune system involved in antimicrobial host defense and maintenance of tissue integrity. IL17A-IL17F signals via IL17RA-IL17RC heterodimeric receptor complex, triggering homotypic interaction of IL17RA and IL17RC chains with TRAF3IP2 adapter through SEFIR domains. This leads to downstream TRAF6-mediated activation of NF-kappa-B and MAPkinase pathways ultimately resulting in transcriptional activation of cytokines, chemokines, antimicrobial peptides and matrix metalloproteinases, with potential strong immune inflammation. IL17A-IL17F is primarily involved in host defense against extracellular bacteria and fungi by inducing neutrophilic inflammation. As signature effector cytokine of T-helper 17 cells (Th17), primarily induces neutrophil activation and recruitment at infection and inflammatory sites. Stimulates the production of antimicrobial beta-defensins DEFB1, DEFB103A, and DEFB104A by mucosal epithelial cells, limiting the entry of microbes through the epithelial barriers. IL17F homodimer can signal via IL17RC homodimeric receptor complex, triggering downstream activation of TRAF6 and NF-kappa-B signaling pathway. Via IL17RC induces transcriptional activation of IL33, a potent cytokine that stimulates group 2 innate lymphoid cells and adaptive T-helper 2 cells involved in pulmonary allergic response to fungi. Likely via IL17RC, promotes sympathetic innervation of peripheral organs by coordinating the communication between gamma-delta T cells and parenchymal cells. Stimulates sympathetic innervation of thermogenic adipose tissue by driving TGFB1 expression. Regulates the composition of intestinal microbiota and immune tolerance by inducing antimicrobial proteins that specifically control the growth of commensal Firmicutes and Bacteroidetes. The chain is Interleukin-17F (IL17F) from Callithrix jacchus (White-tufted-ear marmoset).